The chain runs to 218 residues: Pyridoxine/pyridoxamine 5'-phosphate oxidase (218 aa).

Residues 14–17 (RREY) and Lys-72 contribute to the substrate site. FMN-binding positions include 67 to 72 (RIVLLK), 82 to 83 (YT), Arg-88, Lys-89, and Gln-111. Residues Tyr-129, Arg-133, and Ser-137 each coordinate substrate. Residues 146–147 (QS) and Trp-191 each bind FMN. Position 197–199 (197–199 (RLH)) interacts with substrate. An FMN-binding site is contributed by Arg-201.

It belongs to the pyridoxamine 5'-phosphate oxidase family. In terms of assembly, homodimer. Requires FMN as cofactor.

It carries out the reaction pyridoxamine 5'-phosphate + O2 + H2O = pyridoxal 5'-phosphate + H2O2 + NH4(+). The enzyme catalyses pyridoxine 5'-phosphate + O2 = pyridoxal 5'-phosphate + H2O2. Its pathway is cofactor metabolism; pyridoxal 5'-phosphate salvage; pyridoxal 5'-phosphate from pyridoxamine 5'-phosphate: step 1/1. It functions in the pathway cofactor metabolism; pyridoxal 5'-phosphate salvage; pyridoxal 5'-phosphate from pyridoxine 5'-phosphate: step 1/1. Functionally, catalyzes the oxidation of either pyridoxine 5'-phosphate (PNP) or pyridoxamine 5'-phosphate (PMP) into pyridoxal 5'-phosphate (PLP). The chain is Pyridoxine/pyridoxamine 5'-phosphate oxidase from Escherichia fergusonii (strain ATCC 35469 / DSM 13698 / CCUG 18766 / IAM 14443 / JCM 21226 / LMG 7866 / NBRC 102419 / NCTC 12128 / CDC 0568-73).